Reading from the N-terminus, the 298-residue chain is Diphthine methyl ester synthase (298 aa).

Residues Leu-9, Asp-85, Gly-88, 113–114 (SV), Leu-164, Leu-222, and His-247 contribute to the S-adenosyl-L-methionine site.

Belongs to the diphthine synthase family.

It localises to the cytoplasm. The catalysed reaction is 2-[(3S)-amino-3-carboxypropyl]-L-histidyl-[translation elongation factor 2] + 4 S-adenosyl-L-methionine = diphthine methyl ester-[translation elongation factor 2] + 4 S-adenosyl-L-homocysteine + 3 H(+). Its pathway is protein modification; peptidyl-diphthamide biosynthesis. In terms of biological role, S-adenosyl-L-methionine-dependent methyltransferase that catalyzes four methylations of the modified target histidine residue in translation elongation factor 2 (EF-2), to form an intermediate called diphthine methyl ester. The four successive methylation reactions represent the second step of diphthamide biosynthesis. This Eremothecium gossypii (strain ATCC 10895 / CBS 109.51 / FGSC 9923 / NRRL Y-1056) (Yeast) protein is Diphthine methyl ester synthase (DPH5).